The chain runs to 181 residues: Ferredoxin C 2, chloroplastic (181 aa).

The N-terminal 44 residues, 1–44, are a transit peptide targeting the chloroplast; that stretch reads MALILPCTFCTSLQKKNFPINRRYITNFRRGATTATCEFRIPVE. The 93-residue stretch at 59 to 151 folds into the 2Fe-2S ferredoxin-type domain; sequence HKVTVHDRQR…DLEVETQDED (93 aa). [2Fe-2S] cluster-binding residues include Cys-97, Cys-102, Cys-105, and Cys-135.

It belongs to the 2Fe2S plant-type ferredoxin family. [2Fe-2S] cluster is required as a cofactor.

The protein resides in the plastid. The protein localises to the chloroplast. Functionally, ferredoxins are iron-sulfur proteins that transfer electrons in a wide variety of metabolic reactions. Mediates alternative electron partitioning in conditions of acceptor limitation at photosystem I. This is Ferredoxin C 2, chloroplastic from Arabidopsis thaliana (Mouse-ear cress).